Reading from the N-terminus, the 164-residue chain is Large ribosomal subunit protein bL9 (164 aa).

It belongs to the bacterial ribosomal protein bL9 family.

Binds to the 23S rRNA. This is Large ribosomal subunit protein bL9 from Borrelia duttonii (strain Ly).